Here is a 370-residue protein sequence, read N- to C-terminus: Probable trehalose-phosphate phosphatase 6 (370 aa).

It belongs to the trehalose phosphatase family. Requires a divalent metal cation as cofactor.

It carries out the reaction alpha,alpha-trehalose 6-phosphate + H2O = alpha,alpha-trehalose + phosphate. It participates in glycan biosynthesis; trehalose biosynthesis. In terms of biological role, removes the phosphate from trehalose 6-phosphate to produce free trehalose. Trehalose accumulation in plant may improve abiotic stress tolerance. This Oryza sativa subsp. japonica (Rice) protein is Probable trehalose-phosphate phosphatase 6 (TPP6).